A 562-amino-acid chain; its full sequence is Apical membrane antigen 1 (562 aa).

The N-terminal stretch at 1–21 (MNKIYCILFLSAQCLVHMGKC) is a signal peptide. Over 22-484 (EPNQKPSRLT…QYAQGESKNQ (463 aa)) the chain is Extracellular. Residues Asn-84 and Asn-176 are each glycosylated (N-linked (GlcNAc...) asparagine). 8 disulfides stabilise this stretch: Cys-94-Cys-247, Cys-162-Cys-192, Cys-208-Cys-220, Cys-265-Cys-363, Cys-282-Cys-354, Cys-388-Cys-444, Cys-432-Cys-449, and Cys-434-Cys-451. A glycan (N-linked (GlcNAc...) asparagine) is linked at Asn-226. N-linked (GlcNAc...) asparagine glycans are attached at residues Asn-405 and Asn-441. A helical membrane pass occupies residues 485 to 507 (MLLIIIGITGGVCVVALASMFYF). Over 508-562 (RKKAHNDKYDKMEQADGYGKPTTRKDEMLDPEASFWGEEKRASHTTPVLMEKPYY) the chain is Cytoplasmic. The disordered stretch occupies residues 519-543 (MEQADGYGKPTTRKDEMLDPEASFW).

It belongs to the apicomplexan parasites AMA1 family.

It localises to the membrane. Functionally, involved in parasite invasion of erythrocytes. In Plasmodium fragile, this protein is Apical membrane antigen 1 (AMA-1).